A 383-amino-acid polypeptide reads, in one-letter code: Delta(12) acyl-lipid conjugase (11E,13E-forming) (383 aa).

Residues 1–30 form a disordered region; sequence MGEVGPTNRTKTKLDKQQESENRVPHEPPP. Basic and acidic residues predominate over residues 12 to 26; that stretch reads TKLDKQQESENRVPH. A run of 2 helical transmembrane segments spans residues 56-76 and 84-104; these read VIHDIIILSFFYYVAANYIPM and VAWPIYWAIQGCVQLGILVLG. The Histidine box-1 motif lies at 105 to 109; the sequence is HECGH. The Histidine box-2 signature appears at 141-145; that stretch reads HRRHH. The next 3 helical transmembrane spans lie at 179–199, 225–245, and 249–269; these read FLMIFGALLFGWPSYLLFNAN, VIASDVGLVFAYFVLYKIALA, and VWLICVYGVPYVILNGLIVLI. A Histidine box-3 motif is present at residues 315-319; the sequence is HLVHH.

This sequence belongs to the fatty acid desaturase type 1 family. In terms of tissue distribution, expressed in developing seeds, but not in leaves.

It is found in the membrane. It catalyses the reaction a (9Z,12Z)-octadecadienoyl-containing glycerolipid + 2 Fe(II)-[cytochrome b5] + O2 + 2 H(+) = a (9Z,11E,13E)-octadecatrienoyl-containing glycerolipid + 2 Fe(III)-[cytochrome b5] + 2 H2O. It carries out the reaction (9Z,12Z,15Z)-octadecatrienoyl-containing glycerolipid + 2 Fe(II)-[cytochrome b5] + O2 + 2 H(+) = a (9Z,11E,13E,15Z)-octadecatetraenoyl-containing glycerolipid + 2 Fe(III)-[cytochrome b5] + 2 H2O. The protein operates within lipid metabolism; polyunsaturated fatty acid biosynthesis. Functionally, converts linoleic acid to alpha-eleostearic acid (18:3(9Z,11E,13E)) and alpha-linolenic acid to alpha-parinaric acid (18:4(9Z,11E, 13E, 15Z)). Converts a single cis double bond at carbon 12 to two conjugated trans bonds at positions 11 and 13. This chain is Delta(12) acyl-lipid conjugase (11E,13E-forming), found in Impatiens balsamina (Balsam).